A 163-amino-acid polypeptide reads, in one-letter code: Shikimate kinase (163 aa).

10 to 15 (GVGKSS) lines the ATP pocket. Ser-14 contacts Mg(2+). Asp-28, Arg-52, and Gly-75 together coordinate substrate. Residue Arg-116 participates in ATP binding. Arg-134 provides a ligand contact to substrate. Residue Arg-151 coordinates ATP.

Belongs to the shikimate kinase family. Monomer. It depends on Mg(2+) as a cofactor.

Its subcellular location is the cytoplasm. It carries out the reaction shikimate + ATP = 3-phosphoshikimate + ADP + H(+). Its pathway is metabolic intermediate biosynthesis; chorismate biosynthesis; chorismate from D-erythrose 4-phosphate and phosphoenolpyruvate: step 5/7. In terms of biological role, catalyzes the specific phosphorylation of the 3-hydroxyl group of shikimic acid using ATP as a cosubstrate. This is Shikimate kinase from Streptococcus thermophilus (strain ATCC BAA-491 / LMD-9).